The following is a 220-amino-acid chain: Octanoyltransferase (220 aa).

Positions 36–212 constitute a BPL/LPL catalytic domain; it reads ADSPDQFWLV…CLARQLGRRL (177 aa). Substrate is bound by residues 75–82, 142–144, and 155–157; these read RGGQVTYH, SLG, and GVA. Cys-173 functions as the Acyl-thioester intermediate in the catalytic mechanism.

Belongs to the LipB family.

The protein resides in the cytoplasm. The catalysed reaction is octanoyl-[ACP] + L-lysyl-[protein] = N(6)-octanoyl-L-lysyl-[protein] + holo-[ACP] + H(+). Its pathway is protein modification; protein lipoylation via endogenous pathway; protein N(6)-(lipoyl)lysine from octanoyl-[acyl-carrier-protein]: step 1/2. Its function is as follows. Catalyzes the transfer of endogenously produced octanoic acid from octanoyl-acyl-carrier-protein onto the lipoyl domains of lipoate-dependent enzymes. Lipoyl-ACP can also act as a substrate although octanoyl-ACP is likely to be the physiological substrate. This Chromohalobacter salexigens (strain ATCC BAA-138 / DSM 3043 / CIP 106854 / NCIMB 13768 / 1H11) protein is Octanoyltransferase.